The primary structure comprises 206 residues: Protein PH0010 (206 aa).

The AMMECR1 domain maps to 8–202 (EWGEFLVRLA…EEYPRGPIKR (195 aa)).

This is Protein PH0010 from Pyrococcus horikoshii (strain ATCC 700860 / DSM 12428 / JCM 9974 / NBRC 100139 / OT-3).